We begin with the raw amino-acid sequence, 31 residues long: uncharacterized protein (31 aa).

Residues Met1 to Ala31 are disordered.

This is an uncharacterized protein from Sulfolobus islandicus filamentous virus (isolate Iceland/Hveragerdi) (SIFV).